A 369-amino-acid chain; its full sequence is Cytoplasmic tRNA 2-thiolation protein 1 (369 aa).

This sequence belongs to the TtcA family. CTU1/NCS6/ATPBD3 subfamily.

It localises to the cytoplasm. It participates in tRNA modification; 5-methoxycarbonylmethyl-2-thiouridine-tRNA biosynthesis. Functionally, plays a central role in 2-thiolation of mcm(5)S(2)U at tRNA wobble positions of tRNA(Lys), tRNA(Glu) and tRNA(Gln). Directly binds tRNAs and probably acts by catalyzing adenylation of tRNAs, an intermediate required for 2-thiolation. It is unclear whether it acts as a sulfurtransferase that transfers sulfur from thiocarboxylated URM1 onto the uridine of tRNAs at wobble position. Prior mcm(5) tRNA modification by the elongator complex is required for 2-thiolation. May also be involved in protein urmylation. The polypeptide is Cytoplasmic tRNA 2-thiolation protein 1 (Meyerozyma guilliermondii (strain ATCC 6260 / CBS 566 / DSM 6381 / JCM 1539 / NBRC 10279 / NRRL Y-324) (Yeast)).